The sequence spans 138 residues: Cysteine desulfuration protein SufE (138 aa).

C51 functions as the Cysteine persulfide intermediate in the catalytic mechanism.

The protein belongs to the SufE family. As to quaternary structure, homodimer. Interacts with SufS.

It is found in the cytoplasm. Its pathway is cofactor biosynthesis; iron-sulfur cluster biosynthesis. Its function is as follows. Participates in cysteine desulfuration mediated by SufS. Cysteine desulfuration mobilizes sulfur from L-cysteine to yield L-alanine and constitutes an essential step in sulfur metabolism for biosynthesis of a variety of sulfur-containing biomolecules. Functions as a sulfur acceptor for SufS, by mediating the direct transfer of the sulfur atom from the S-sulfanylcysteine of SufS, an intermediate product of cysteine desulfuration process. This chain is Cysteine desulfuration protein SufE, found in Salmonella dublin (strain CT_02021853).